Consider the following 191-residue polypeptide: MILITDSAQEHFAKLLSKQEDGTQIRVFVINPGTPTAECGVSYCPPDAVEATDTELKFDKLSAFVDELSAPYLQDAEIDFVTDNLGSQLTLKAPNAKMRKVSDDAPLIERVEYLLQAQINPQLASHGGKVSLMEITDEGYAILQFGGGCNGCSMVDVTLKEGIEKEMLAAFPELKGVRDLTEHQRGEHSFY.

2 residues coordinate [4Fe-4S] cluster: Cys-149 and Cys-152.

Belongs to the NfuA family. In terms of assembly, homodimer. It depends on [4Fe-4S] cluster as a cofactor.

Involved in iron-sulfur cluster biogenesis. Binds a 4Fe-4S cluster, can transfer this cluster to apoproteins, and thereby intervenes in the maturation of Fe/S proteins. Could also act as a scaffold/chaperone for damaged Fe/S proteins. The protein is Fe/S biogenesis protein NfuA of Erwinia tasmaniensis (strain DSM 17950 / CFBP 7177 / CIP 109463 / NCPPB 4357 / Et1/99).